Here is a 297-residue protein sequence, read N- to C-terminus: Homoserine kinase (297 aa).

82–92 is a binding site for ATP; the sequence is PLTRGLGSSAS.

Belongs to the GHMP kinase family. Homoserine kinase subfamily.

It localises to the cytoplasm. The catalysed reaction is L-homoserine + ATP = O-phospho-L-homoserine + ADP + H(+). It functions in the pathway amino-acid biosynthesis; L-threonine biosynthesis; L-threonine from L-aspartate: step 4/5. Its function is as follows. Catalyzes the ATP-dependent phosphorylation of L-homoserine to L-homoserine phosphate. This is Homoserine kinase from Bacillus thuringiensis (strain Al Hakam).